The primary structure comprises 154 residues: 3-hydroxyacyl-[acyl-carrier-protein] dehydratase FabZ (154 aa).

Residue H54 is part of the active site.

It belongs to the thioester dehydratase family. FabZ subfamily.

It is found in the cytoplasm. It catalyses the reaction a (3R)-hydroxyacyl-[ACP] = a (2E)-enoyl-[ACP] + H2O. Functionally, involved in unsaturated fatty acids biosynthesis. Catalyzes the dehydration of short chain beta-hydroxyacyl-ACPs and long chain saturated and unsaturated beta-hydroxyacyl-ACPs. The sequence is that of 3-hydroxyacyl-[acyl-carrier-protein] dehydratase FabZ from Chlamydia abortus (strain DSM 27085 / S26/3) (Chlamydophila abortus).